The following is a 211-amino-acid chain: Formate dehydrogenase, cytochrome b556(fdo) subunit (211 aa).

The Cytoplasmic portion of the chain corresponds to 1–17 (MKRRDTIVRYTAPERIN). H18 is a binding site for heme b. A helical membrane pass occupies residues 18–32 (HWITAFCFILAAVSG). Residues 33 to 53 (LGFLFPSFNWLMQIMGTPQLA) lie on the Periplasmic side of the membrane. A helical membrane pass occupies residues 54 to 72 (RILHPFVGVVMFASFIIMF). Residue H57 coordinates heme b. At 73 to 112 (FRYWHHNLINRDDIFWAKNIRKIVVNEEVGDTGRYNFGQK) the chain is on the cytoplasmic side. The helical transmembrane segment at 113–130 (CVFWAAIIFLVLLLVSGV) threads the bilayer. Residues 131–151 (IIWRPYFAPAFSIPVIRFALM) lie on the Periplasmic side of the membrane. The helical transmembrane segment at 152–170 (LHSFAAVALIVVIMVHIYA) threads the bilayer. H153 and H167 together coordinate heme b. At 171–211 (ALWVKGTITAMVEGWVTSAWAKKHHPRWYREVRKTTEKKAE) the chain is on the cytoplasmic side.

The protein belongs to the formate dehydrogenase gamma subunit family. In terms of assembly, formate dehydrogenase is a membrane-bound complex, formed by subunits alpha, beta and gamma. The cofactor is heme.

It is found in the cell inner membrane. In terms of biological role, allows to use formate as major electron donor during aerobic respiration. Subunit gamma is probably the cytochrome b556(FDO) component of the formate dehydrogenase. This chain is Formate dehydrogenase, cytochrome b556(fdo) subunit (fdoI), found in Escherichia coli O157:H7.